Consider the following 596-residue polypeptide: Transketolase-like protein 1 (596 aa).

Histidine 46 contacts substrate. Thiamine diphosphate contacts are provided by residues serine 49 and 94–96 (GWL). Residue aspartate 126 participates in Mg(2+) binding. Positions 127 and 156 each coordinate thiamine diphosphate. Positions 156 and 158 each coordinate Mg(2+). Residues lysine 218 and histidine 232 each coordinate thiamine diphosphate. Substrate is bound by residues histidine 232, arginine 292, and serine 319. Residues glutamate 340 and phenylalanine 366 each coordinate thiamine diphosphate. Glutamate 340 (proton donor) is an active-site residue. Residues histidine 390 and aspartate 398 each coordinate substrate. Thiamine diphosphate is bound at residue glutamine 402. Arginine 448 lines the substrate pocket.

The protein belongs to the transketolase family. In terms of assembly, homodimer. Mg(2+) is required as a cofactor. The cofactor is Ca(2+). It depends on Mn(2+) as a cofactor. Co(2+) serves as cofactor. Requires thiamine diphosphate as cofactor. Widely expressed. Expressed in endothelial cells and in peripheral neurons (at protein level). In terms of tissue distribution, not expressed in fetal neocortex. As to expression, expressed in fetal neocortex.

Its subcellular location is the cytoplasm. The catalysed reaction is D-sedoheptulose 7-phosphate + D-glyceraldehyde 3-phosphate = aldehydo-D-ribose 5-phosphate + D-xylulose 5-phosphate. In terms of biological role, catalyzes the transfer of a two-carbon ketol group from a ketose donor to an aldose acceptor, via a covalent intermediate with the cofactor thiamine pyrophosphate. Its function is as follows. During fetal neocortex development, may be essential to maintain the full number of basal radial glia (bRG). bRG are neural progenitor cells that undergo asymmetric divisions, generating a bRG (self-renewal) and a neuron, in contrast to basal intermediate progenitors (bIPs), which typically divide once to give rise to 2 neurons. bRG generate more cortical neurons over time than bIPs. The polypeptide is Transketolase-like protein 1 (TKTL1) (Homo sapiens (Human)).